The primary structure comprises 308 residues: Aspartate carbamoyltransferase catalytic subunit (308 aa).

Carbamoyl phosphate-binding residues include R49 and T50. Residue K77 participates in L-aspartate binding. The carbamoyl phosphate site is built by R99, H127, and Q130. 2 residues coordinate L-aspartate: R160 and R211. Positions 252 and 253 each coordinate carbamoyl phosphate.

Belongs to the aspartate/ornithine carbamoyltransferase superfamily. ATCase family. Heterododecamer (2C3:3R2) of six catalytic PyrB chains organized as two trimers (C3), and six regulatory PyrI chains organized as three dimers (R2).

The catalysed reaction is carbamoyl phosphate + L-aspartate = N-carbamoyl-L-aspartate + phosphate + H(+). The protein operates within pyrimidine metabolism; UMP biosynthesis via de novo pathway; (S)-dihydroorotate from bicarbonate: step 2/3. Functionally, catalyzes the condensation of carbamoyl phosphate and aspartate to form carbamoyl aspartate and inorganic phosphate, the committed step in the de novo pyrimidine nucleotide biosynthesis pathway. This Geobacillus kaustophilus (strain HTA426) protein is Aspartate carbamoyltransferase catalytic subunit.